The sequence spans 146 residues: Leghemoglobin 49 (146 aa).

The 145-residue stretch at 2-146 folds into the Globin domain; sequence GFTQQQEALV…LATAIKKAMS (145 aa). A nitrated tyrosine mark is found at Tyr24 and Tyr29. Ser44 is a heme b binding site. Ser44 is modified (phosphoserine). His61 contacts O2. 2 residues coordinate heme b: His93 and Lys96. At Tyr134 the chain carries Nitrated tyrosine.

Belongs to the plant globin family. In terms of assembly, monomer. Nitrated in effective nodules and particularly in hypoxic conditions; this mechanism may play a protective role in the symbiosis by buffering toxic peroxynitrite NO(2)(-). Nitration level decrease during nodule senescence. Post-translationally, phosphorylation at Ser-44 disrupts the molecular environment of its porphyrin ring oxygen binding pocket, thus leading to a reduced oxygen consumption and to the delivery of oxygen O(2) to symbiosomes. Accumulates in root nodules after inoculation by bacteria of the genus Rhizobium.

Its subcellular location is the cytoplasm. It is found in the cytosol. The protein resides in the nucleus. In terms of biological role, leghemoglobin that reversibly binds oxygen O(2) through a pentacoordinated heme iron. In root nodules, facilitates the diffusion of oxygen to the bacteroids while preventing the bacterial nitrogenase from being inactivated by buffering dioxygen, nitric oxide and carbon monoxide, and promoting the formation of reactive oxygen species (ROS, e.g. H(2)O(2)). This role is essential for symbiotic nitrogen fixation (SNF). In Vicia faba (Broad bean), this protein is Leghemoglobin 49.